Consider the following 391-residue polypeptide: Mannose-6-phosphate isomerase (391 aa).

Positions 97, 99, 134, and 255 each coordinate Zn(2+). Arg-274 is an active-site residue. N6-acetyllysine is present on Lys-280.

Belongs to the mannose-6-phosphate isomerase type 1 family. The cofactor is Zn(2+).

It is found in the cytoplasm. It carries out the reaction D-mannose 6-phosphate = D-fructose 6-phosphate. In terms of biological role, involved in the conversion of glucose to GDP-L-fucose, which can be converted to L-fucose, a capsular polysaccharide. In Escherichia coli (strain K12), this protein is Mannose-6-phosphate isomerase (manA).